The following is a 660-amino-acid chain: Bifunctional polymyxin resistance protein ArnA (660 aa).

The formyltransferase ArnAFT stretch occupies residues 1–304 (MKAVVFAYHD…TLGLVAGARL (304 aa)). Residue His-104 is the Proton donor; for formyltransferase activity of the active site. Residues Arg-114 and 136-140 (VKRAD) contribute to the (6R)-10-formyltetrahydrofolate site. Residues 314–660 (RRTRVLILGV…QSVEPGDAEE (347 aa)) form a dehydrogenase ArnADH region. Residues Asp-347 and 368-369 (DI) each bind NAD(+). UDP-alpha-D-glucuronate is bound by residues Ala-393, Tyr-398, and 432-433 (TS). Glu-434 serves as the catalytic Proton acceptor; for decarboxylase activity. UDP-alpha-D-glucuronate contacts are provided by residues Arg-460, Asn-492, 526 to 535 (KLIDGGRQKR), and Tyr-613. Arg-619 functions as the Proton donor; for decarboxylase activity in the catalytic mechanism.

It in the N-terminal section; belongs to the Fmt family. UDP-L-Ara4N formyltransferase subfamily. In the C-terminal section; belongs to the NAD(P)-dependent epimerase/dehydratase family. UDP-glucuronic acid decarboxylase subfamily. As to quaternary structure, homohexamer, formed by a dimer of trimers.

The enzyme catalyses UDP-alpha-D-glucuronate + NAD(+) = UDP-beta-L-threo-pentopyranos-4-ulose + CO2 + NADH. The catalysed reaction is UDP-4-amino-4-deoxy-beta-L-arabinose + (6R)-10-formyltetrahydrofolate = UDP-4-deoxy-4-formamido-beta-L-arabinose + (6S)-5,6,7,8-tetrahydrofolate + H(+). It participates in nucleotide-sugar biosynthesis; UDP-4-deoxy-4-formamido-beta-L-arabinose biosynthesis; UDP-4-deoxy-4-formamido-beta-L-arabinose from UDP-alpha-D-glucuronate: step 1/3. Its pathway is nucleotide-sugar biosynthesis; UDP-4-deoxy-4-formamido-beta-L-arabinose biosynthesis; UDP-4-deoxy-4-formamido-beta-L-arabinose from UDP-alpha-D-glucuronate: step 3/3. The protein operates within bacterial outer membrane biogenesis; lipopolysaccharide biosynthesis. In terms of biological role, bifunctional enzyme that catalyzes the oxidative decarboxylation of UDP-glucuronic acid (UDP-GlcUA) to UDP-4-keto-arabinose (UDP-Ara4O) and the addition of a formyl group to UDP-4-amino-4-deoxy-L-arabinose (UDP-L-Ara4N) to form UDP-L-4-formamido-arabinose (UDP-L-Ara4FN). The modified arabinose is attached to lipid A and is required for resistance to polymyxin and cationic antimicrobial peptides. This Erwinia tasmaniensis (strain DSM 17950 / CFBP 7177 / CIP 109463 / NCPPB 4357 / Et1/99) protein is Bifunctional polymyxin resistance protein ArnA.